The sequence spans 63 residues: ATP synthase F(0) complex subunit 8 (63 aa).

A helical membrane pass occupies residues 8 to 24 (TWLLTILSMLLTLFVLF). N6-acetyllysine is present on K57.

The protein belongs to the ATPase protein 8 family. As to quaternary structure, component of the ATP synthase complex composed at least of ATP5F1A/subunit alpha, ATP5F1B/subunit beta, ATP5MC1/subunit c (homooctomer), MT-ATP6/subunit a, MT-ATP8/subunit 8, ATP5ME/subunit e, ATP5MF/subunit f, ATP5MG/subunit g, ATP5MK/subunit k, ATP5MJ/subunit j, ATP5F1C/subunit gamma, ATP5F1D/subunit delta, ATP5F1E/subunit epsilon, ATP5PF/subunit F6, ATP5PB/subunit b, ATP5PD/subunit d, ATP5PO/subunit OSCP. ATP synthase complex consists of a soluble F(1) head domain (subunits alpha(3) and beta(3)) - the catalytic core - and a membrane F(0) domain - the membrane proton channel (subunits c, a, 8, e, f, g, k and j). These two domains are linked by a central stalk (subunits gamma, delta, and epsilon) rotating inside the F1 region and a stationary peripheral stalk (subunits F6, b, d, and OSCP). Interacts with PRICKLE3.

It is found in the mitochondrion membrane. Subunit 8, of the mitochondrial membrane ATP synthase complex (F(1)F(0) ATP synthase or Complex V) that produces ATP from ADP in the presence of a proton gradient across the membrane which is generated by electron transport complexes of the respiratory chain. ATP synthase complex consist of a soluble F(1) head domain - the catalytic core - and a membrane F(1) domain - the membrane proton channel. These two domains are linked by a central stalk rotating inside the F(1) region and a stationary peripheral stalk. During catalysis, ATP synthesis in the catalytic domain of F(1) is coupled via a rotary mechanism of the central stalk subunits to proton translocation. In vivo, can only synthesize ATP although its ATP hydrolase activity can be activated artificially in vitro. Part of the complex F(0) domain. The chain is ATP synthase F(0) complex subunit 8 from Balaenoptera musculus (Blue whale).